Reading from the N-terminus, the 312-residue chain is Serine/threonine-protein kinase ppk11 (312 aa).

The Protein kinase domain occupies 6–258; that stretch reads YRDLQLIGQG…AEYLSKHKFI (253 aa). ATP is bound by residues 12-20 and K35; that span reads IGQGSFGSV. Catalysis depends on D127, which acts as the Proton acceptor.

This sequence belongs to the protein kinase superfamily. Ser/Thr protein kinase family.

The protein localises to the cytoplasm. It is found in the nucleus. The enzyme catalyses L-seryl-[protein] + ATP = O-phospho-L-seryl-[protein] + ADP + H(+). It catalyses the reaction L-threonyl-[protein] + ATP = O-phospho-L-threonyl-[protein] + ADP + H(+). In Schizosaccharomyces pombe (strain 972 / ATCC 24843) (Fission yeast), this protein is Serine/threonine-protein kinase ppk11 (ppk11).